We begin with the raw amino-acid sequence, 233 residues long: Large ribosomal subunit protein uL1 (233 aa).

The protein belongs to the universal ribosomal protein uL1 family. In terms of assembly, part of the 50S ribosomal subunit.

Functionally, binds directly to 23S rRNA. The L1 stalk is quite mobile in the ribosome, and is involved in E site tRNA release. Protein L1 is also a translational repressor protein, it controls the translation of the L11 operon by binding to its mRNA. In Brucella anthropi (strain ATCC 49188 / DSM 6882 / CCUG 24695 / JCM 21032 / LMG 3331 / NBRC 15819 / NCTC 12168 / Alc 37) (Ochrobactrum anthropi), this protein is Large ribosomal subunit protein uL1.